The primary structure comprises 268 residues: Early nodulin-20 (268 aa).

The N-terminal stretch at 1–24 (MSSSSPILLMFIFSIWMLISYSES) is a signal peptide. The Phytocyanin domain occupies 25 to 129 (TDYLVGDSEN…GLKLAVVVMV (105 aa)). The N-linked (GlcNAc...) asparagine glycan is linked to Asn67. A disulfide bond links Cys83 and Cys117. Composition is skewed to pro residues over residues 134-145 (SSPPPPPSPPTP) and 160-185 (PSPP…TPIP). Positions 134-253 (SSPPPPPSPP…SGSKGGGAGH (120 aa)) are disordered. Positions 199 to 235 (PSLSKSPSPSESPSLAPSPSDSVASLAPSSSPSDESP) are enriched in low complexity. A lipid anchor (GPI-anchor amidated serine) is attached at Ser243. A propeptide spans 244–268 (SGSKGGGAGHGFLEVSIAMMMFLIF) (removed in mature form).

Belongs to the early nodulin-like (ENODL) family.

Its subcellular location is the cell membrane. Its function is as follows. May act as a carbohydrate transporter. The protein is Early nodulin-20 of Medicago truncatula (Barrel medic).